Here is a 124-residue protein sequence, read N- to C-terminus: Phosphoribosyl-ATP pyrophosphatase (124 aa).

This sequence belongs to the PRA-PH family.

The protein localises to the cytoplasm. It carries out the reaction 1-(5-phospho-beta-D-ribosyl)-ATP + H2O = 1-(5-phospho-beta-D-ribosyl)-5'-AMP + diphosphate + H(+). It functions in the pathway amino-acid biosynthesis; L-histidine biosynthesis; L-histidine from 5-phospho-alpha-D-ribose 1-diphosphate: step 2/9. This chain is Phosphoribosyl-ATP pyrophosphatase, found in Ralstonia pickettii (strain 12J).